Consider the following 613-residue polypeptide: DNA polymerase II small subunit (613 aa).

Belongs to the DNA polymerase delta/II small subunit family. As to quaternary structure, heterodimer of a large subunit and a small subunit.

The catalysed reaction is DNA(n) + a 2'-deoxyribonucleoside 5'-triphosphate = DNA(n+1) + diphosphate. It catalyses the reaction Exonucleolytic cleavage in the 3'- to 5'-direction to yield nucleoside 5'-phosphates.. In terms of biological role, possesses two activities: a DNA synthesis (polymerase) and an exonucleolytic activity that degrades single-stranded DNA in the 3' to 5' direction. Has a template-primer preference which is characteristic of a replicative DNA polymerase. In Pyrococcus furiosus (strain ATCC 43587 / DSM 3638 / JCM 8422 / Vc1), this protein is DNA polymerase II small subunit (polB).